Reading from the N-terminus, the 108-residue chain is Nucleoid-associated protein Rmet_2128 (108 aa).

Polar residues predominate over residues 86–96 (TTQEKMGSMTS). The disordered stretch occupies residues 86 to 108 (TTQEKMGSMTSGLPLPPGFKLPF). The segment covering 99–108 (PLPPGFKLPF) has biased composition (pro residues).

This sequence belongs to the YbaB/EbfC family. In terms of assembly, homodimer.

The protein resides in the cytoplasm. It localises to the nucleoid. In terms of biological role, binds to DNA and alters its conformation. May be involved in regulation of gene expression, nucleoid organization and DNA protection. The polypeptide is Nucleoid-associated protein Rmet_2128 (Cupriavidus metallidurans (strain ATCC 43123 / DSM 2839 / NBRC 102507 / CH34) (Ralstonia metallidurans)).